Here is a 181-residue protein sequence, read N- to C-terminus: Bifunctional protein PyrR (181 aa).

Residues 39–40 (RR), 104–112 (DDVLYTGRT), arginine 137, and valine 161 contribute to the substrate site. The short motif at 100-112 (VILVDDVLYTGRT) is the PRPP-binding element.

Belongs to the purine/pyrimidine phosphoribosyltransferase family. PyrR subfamily.

It carries out the reaction UMP + diphosphate = 5-phospho-alpha-D-ribose 1-diphosphate + uracil. Functionally, regulates the transcription of the pyrimidine nucleotide (pyr) operon in response to exogenous pyrimidines. Its function is as follows. Also displays a weak uracil phosphoribosyltransferase activity which is not physiologically significant. The polypeptide is Bifunctional protein PyrR (Pasteurella multocida (strain Pm70)).